The chain runs to 335 residues: Glyceraldehyde-3-phosphate dehydrogenase, cytosolic (335 aa).

NAD(+) contacts are provided by residues 13–14, aspartate 35, and arginine 80; that span reads RI. D-glyceraldehyde 3-phosphate contacts are provided by residues 151 to 153, threonine 182, 211 to 212, and arginine 234; these read SCT and TG. Cysteine 152 serves as the catalytic Nucleophile. Asparagine 316 provides a ligand contact to NAD(+).

Belongs to the glyceraldehyde-3-phosphate dehydrogenase family. In terms of assembly, homotetramer.

Its subcellular location is the cytoplasm. It catalyses the reaction D-glyceraldehyde 3-phosphate + phosphate + NAD(+) = (2R)-3-phospho-glyceroyl phosphate + NADH + H(+). It functions in the pathway carbohydrate degradation; glycolysis; pyruvate from D-glyceraldehyde 3-phosphate: step 1/5. This is Glyceraldehyde-3-phosphate dehydrogenase, cytosolic (GAPC) from Chondrus crispus (Carrageen Irish moss).